Here is a 355-residue protein sequence, read N- to C-terminus: Phenylalanine--tRNA ligase alpha subunit (355 aa).

Glu273 contributes to the Mg(2+) binding site.

The protein belongs to the class-II aminoacyl-tRNA synthetase family. Phe-tRNA synthetase alpha subunit type 1 subfamily. Tetramer of two alpha and two beta subunits. It depends on Mg(2+) as a cofactor.

The protein resides in the cytoplasm. The catalysed reaction is tRNA(Phe) + L-phenylalanine + ATP = L-phenylalanyl-tRNA(Phe) + AMP + diphosphate + H(+). The sequence is that of Phenylalanine--tRNA ligase alpha subunit from Bifidobacterium animalis subsp. lactis (strain AD011).